The sequence spans 430 residues: Citrate synthase (430 aa).

Active-site residues include His305 and Asp363.

Belongs to the citrate synthase family. In terms of assembly, homohexamer.

The enzyme catalyses oxaloacetate + acetyl-CoA + H2O = citrate + CoA + H(+). Its pathway is carbohydrate metabolism; tricarboxylic acid cycle; isocitrate from oxaloacetate: step 1/2. With respect to regulation, allosterically inhibited by NADH. The sequence is that of Citrate synthase (gltA) from Coxiella burnetii (strain RSA 493 / Nine Mile phase I).